We begin with the raw amino-acid sequence, 506 residues long: Maturase K (506 aa).

This sequence belongs to the intron maturase 2 family. MatK subfamily.

The protein resides in the plastid. It localises to the chloroplast. Usually encoded in the trnK tRNA gene intron. Probably assists in splicing its own and other chloroplast group II introns. The sequence is that of Maturase K from Trifolium incarnatum (Crimson clover).